Consider the following 302-residue polypeptide: Sulfate adenylyltransferase subunit 2 (302 aa).

Belongs to the PAPS reductase family. CysD subfamily. In terms of assembly, heterodimer composed of CysD, the smaller subunit, and CysN.

It catalyses the reaction sulfate + ATP + H(+) = adenosine 5'-phosphosulfate + diphosphate. The protein operates within sulfur metabolism; hydrogen sulfide biosynthesis; sulfite from sulfate: step 1/3. Its function is as follows. With CysN forms the ATP sulfurylase (ATPS) that catalyzes the adenylation of sulfate producing adenosine 5'-phosphosulfate (APS) and diphosphate, the first enzymatic step in sulfur assimilation pathway. APS synthesis involves the formation of a high-energy phosphoric-sulfuric acid anhydride bond driven by GTP hydrolysis by CysN coupled to ATP hydrolysis by CysD. The chain is Sulfate adenylyltransferase subunit 2 from Xanthomonas oryzae pv. oryzae (strain MAFF 311018).